Reading from the N-terminus, the 448-residue chain is Probable glycine dehydrogenase (decarboxylating) subunit 1 (448 aa).

It belongs to the GcvP family. N-terminal subunit subfamily. In terms of assembly, the glycine cleavage system is composed of four proteins: P, T, L and H. In this organism, the P 'protein' is a heterodimer of two subunits.

It catalyses the reaction N(6)-[(R)-lipoyl]-L-lysyl-[glycine-cleavage complex H protein] + glycine + H(+) = N(6)-[(R)-S(8)-aminomethyldihydrolipoyl]-L-lysyl-[glycine-cleavage complex H protein] + CO2. Its function is as follows. The glycine cleavage system catalyzes the degradation of glycine. The P protein binds the alpha-amino group of glycine through its pyridoxal phosphate cofactor; CO(2) is released and the remaining methylamine moiety is then transferred to the lipoamide cofactor of the H protein. The protein is Probable glycine dehydrogenase (decarboxylating) subunit 1 of Caulobacter vibrioides (strain ATCC 19089 / CIP 103742 / CB 15) (Caulobacter crescentus).